A 312-amino-acid polypeptide reads, in one-letter code: MTSLSVNDRKDFVDGQMKYWRQIAESDGFDIDDVPVPRGTRAGLWSVDCKHPRFRLRACLPKIYAMVGLHRYNLLRGTNFEHLELLKYNESMNCVCSYYITSVAVDLSSQLQKTFQIRVDEKSFGDLDLTVSVARPNDEEKVTTEKRFIHHFHCEAAADDFYKGALPDWPSVGDLNNQKRFYMVKKCELQSNDWIRLYLELAVGVRYQQTSESDLSKLQVLKVAIETKEEDVQPPNRRLKSKSLHVYITFKGLAKAPIGDEIGEHVERKAIVRRVIDERSGHLTLLGGFSNAKNDLNQSSDDEQPFGKRRRI.

Belongs to the UPF0725 (EMB2204) family.

The protein is UPF0725 protein At3g19520 of Arabidopsis thaliana (Mouse-ear cress).